The chain runs to 149 residues: Large ribosomal subunit protein bL9 (149 aa).

Belongs to the bacterial ribosomal protein bL9 family.

In terms of biological role, binds to the 23S rRNA. The protein is Large ribosomal subunit protein bL9 of Endomicrobium trichonymphae.